A 544-amino-acid polypeptide reads, in one-letter code: MLKEHPEMAEAPQQQLGIPVVKLEKELPWGRGREDPSPETFRLRFRQFRYQEAAGPQEALRELQELCRRWLRPELHTKEQILELLVLEQFLTILPREFYAWIREHGPESGKALAAMVEDLTERALEAKAVPCHRQGEQEETALCRGAWEPGIQLGPVEVKPEWGMPPGEGVQGPDPGTEEQLSQDPGDETRAFQEQALPVLQAGPGLPAVNPRDQEMAAGFFTAGSQGLGPFKDMALAFPEEEWRHVTPAQIDCFGEYVEPQDCRVSPGGGSKEKEAKPPQEDLKGALVALTSERFGEASLQGPGLGRVCEQEPGGPAGSAPGLPPPQHGAIPLPDEVKTHSSFWKPFQCPECGKGFSRSSNLVRHQRTHEEKSYGCVECGKGFTLREYLMKHQRTHLGKRPYVCSECWKTFSQRHHLEVHQRSHTGEKPYKCGDCWKSFSRRQHLQVHRRTHTGEKPYTCECGKSFSRNANLAVHRRAHTGEKPYGCQVCGKRFSKGERLVRHQRIHTGEKPYHCPACGRSFNQRSILNRHQKTQHRQEPLVQ.

Residues Lys-3 and Lys-22 each participate in a glycyl lysine isopeptide (Lys-Gly) (interchain with G-Cter in SUMO2) cross-link. Residues Arg-42–Ala-124 enclose the SCAN box domain. A Glycyl lysine isopeptide (Lys-Gly) (interchain with G-Cter in SUMO2) cross-link involves residue Lys-128. Positions Val-157–Glu-189 are disordered. Residues Lys-278 and Lys-285 each participate in a glycyl lysine isopeptide (Lys-Gly) (interchain with G-Cter in SUMO2) cross-link. C2H2-type zinc fingers lie at residues Phe-348–His-370, Tyr-375–His-397, Tyr-403–His-425, Tyr-431–His-453, Tyr-459–His-480, and Tyr-486–His-508. The C2H2-type 7; degenerate zinc finger occupies Tyr-514–Gln-536.

The protein belongs to the krueppel C2H2-type zinc-finger protein family.

The protein localises to the nucleus. Functionally, may be involved in transcriptional regulation. This chain is Zinc finger and SCAN domain-containing protein 25 (ZSCAN25), found in Homo sapiens (Human).